Here is a 1023-residue protein sequence, read N- to C-terminus: Exportin-T (1023 aa).

This sequence belongs to the exportin family.

It localises to the nucleus. It is found in the cytoplasm. In terms of biological role, tRNA nucleus export receptor which facilitates tRNA translocation across the nuclear pore complex. Involved in pre-tRNA splicing, probably by affecting the interaction of pre-tRNA with splicing endonuclease. The sequence is that of Exportin-T (los1) from Botryotinia fuckeliana (strain B05.10) (Noble rot fungus).